Reading from the N-terminus, the 97-residue chain is Mapk-regulated corepressor-interacting protein 1 (97 aa).

The tract at residues 1 to 30 is disordered; the sequence is MTSSPVSRVVYNGKRNSSHRSPPNSSEIFT. Ser-21 carries the post-translational modification Phosphoserine. Thr-30 carries the post-translational modification Phosphothreonine. Tyr-41 carries the phosphotyrosine modification. Positions 77–97 are disordered; that stretch reads TFRPIDLSDLKRRNTQDAKKS. The short motif at 80–84 is the PXDLS motif element; that stretch reads PIDLS. A compositionally biased stretch (basic and acidic residues) spans 82 to 97; that stretch reads DLSDLKRRNTQDAKKS.

It belongs to the MCRIP family. Interacts (unphosphorylated form, via the PXDLS motif) with CTBP1, competitively inhibiting CTBP-ZEB1 interaction. Interacts with CTBP2. Interacts with MCRIP2. Interacts with DDX6. Post-translationally, phosphorylation by MAPK3/1 (ERK1/2) regulates MCRIP1 binding to CTBP(s).

The protein localises to the nucleus. Its subcellular location is the cytoplasm. It is found in the stress granule. Its function is as follows. The phosphorylation status of MCRIP1 functions as a molecular switch to regulate epithelial-mesenchymal transition. Unphosphorylated MCRIP1 binds to and inhibits the transcriptional corepressor CTBP(s). When phosphorylated by MAPK/ERK, MCRIP1 releases CTBP(s) resulting in transcriptional silencing of the E-cadherin gene and induction of epithelial-mesenchymal transition. The polypeptide is Mapk-regulated corepressor-interacting protein 1 (MCRIP1) (Bos taurus (Bovine)).